Reading from the N-terminus, the 77-residue chain is Cysteine-rich protein 1 (77 aa).

In terms of domain architecture, LIM zinc-binding spans 2 to 63 (PKCPKCDKEV…HPCYSAMFGP (62 aa)). N6-acetyllysine occurs at positions 9 and 22. At Arg-68 the chain carries Omega-N-methylarginine.

Seems to have a role in zinc absorption and may function as an intracellular zinc transport protein. The polypeptide is Cysteine-rich protein 1 (Crip1) (Mus musculus (Mouse)).